We begin with the raw amino-acid sequence, 543 residues long: Cytochrome P450 monooxygenase CYP1 (543 aa).

The helical transmembrane segment at 40–60 (SSFFTRILIAFIGLCLLSIFS) threads the bilayer. Asparagine 210 and asparagine 367 each carry an N-linked (GlcNAc...) asparagine glycan. A heme-binding site is contributed by cysteine 478. A glycan (N-linked (GlcNAc...) asparagine) is linked at asparagine 517.

Belongs to the cytochrome P450 family. Requires heme as cofactor.

The protein resides in the membrane. It functions in the pathway secondary metabolite biosynthesis. Its function is as follows. Cytochrome P450 monooxygenase; part of the gene cluster that mediates the biosynthesis of a tyrosine-derived cytochalasan acting as a fungal signal recognized by resistant rice plants and leads to avirulence in Pi33 resistant rice cultivars. The first step in the pathway is catalyzed by the hybrid PKS-NRPS ACE1, assisted by the enoyl reductase RAP1, that are responsible for fusion of the tyrosine precursor and the polyketide backbone. The polyketide synthase module (PKS) of ACE1 is responsible for the synthesis of the polyketide backbone and the downstream nonribosomal peptide synthetase (NRPS) amidates the carboxyl end of the polyketide with the tyrosine precursor. Because ACE1 lacks a designated enoylreductase (ER) domain, the required activity is provided the enoyl reductase RAP1. Reduction by the hydrolyase ORFZ, followed by dehydration and intra-molecular Diels-Alder cyclization by the Diels-Alderase ORF3 then yield the required isoindolone-fused macrocycle. A number of oxidative steps catalyzed by the tailoring enzymes identified within the cluster, including cytochrome P450 monooxygenases CYP1 to CYP4, the FAD-linked oxidoreductase OXR2 and the short-chain dehydrogenase/reductase OXR1, are further required to afford the final cytochalasans that confer avirulence and which have still to be identified. The monooxygenase CYP1 has been shown to be a site-selective C-18 hydroxylase whereas the function of CYP3 is the site-selective epoxidation of the C-6/C-7 olefin that is present in some intermediate compounds. Finally, SYN2 and RAP2 are not required for avirulence in Pi33 resistant rice cultivars. In Pyricularia oryzae (strain 70-15 / ATCC MYA-4617 / FGSC 8958) (Rice blast fungus), this protein is Cytochrome P450 monooxygenase CYP1.